A 238-amino-acid chain; its full sequence is Cysteine-rich venom protein pseudechetoxin-like (238 aa).

A signal peptide spans M1–G19. Positions T20–S28 are excised as a propeptide. The SCP domain occupies V38–Y164. 8 disulfides stabilise this stretch: C75/C153, C92/C165, C148/C162, C184/C191, C187/C196, C200/C233, C209/C227, and C218/C231. Positions C200–C233 constitute a ShKT domain.

It belongs to the CRISP family. Expressed by the venom gland.

It is found in the secreted. Functionally, blocks olfactory (CNGA2) and retinal (CNGA1) CNG channel currents. Does not affect neither depolarization- nor caffeine-induced contraction of smooth muscle. This is Cysteine-rich venom protein pseudechetoxin-like from Notechis scutatus scutatus (Mainland tiger snake).